A 213-amino-acid polypeptide reads, in one-letter code: Glutathione S-transferase PARB (213 aa).

The GST N-terminal domain occupies 1–82 (MAIKVHGSPM…YIAHVYADNG (82 aa)). Glutathione-binding positions include S11, 12–13 (TA), 40–41 (HK), 53–54 (QV), and 66–67 (ES). Positions 89-213 (DPKKMPSMSV…WVKGLEKLQK (125 aa)) constitute a GST C-terminal domain.

This sequence belongs to the GST superfamily. Phi family.

It carries out the reaction RX + glutathione = an S-substituted glutathione + a halide anion + H(+). In terms of biological role, conjugation of reduced glutathione to a wide number of exogenous and endogenous hydrophobic electrophiles. This Nicotiana tabacum (Common tobacco) protein is Glutathione S-transferase PARB.